The chain runs to 174 residues: Adenine phosphoribosyltransferase (174 aa).

The protein belongs to the purine/pyrimidine phosphoribosyltransferase family. As to quaternary structure, homodimer.

It is found in the cytoplasm. It catalyses the reaction AMP + diphosphate = 5-phospho-alpha-D-ribose 1-diphosphate + adenine. The protein operates within purine metabolism; AMP biosynthesis via salvage pathway; AMP from adenine: step 1/1. Catalyzes a salvage reaction resulting in the formation of AMP, that is energically less costly than de novo synthesis. In Phocaeicola vulgatus (strain ATCC 8482 / DSM 1447 / JCM 5826 / CCUG 4940 / NBRC 14291 / NCTC 11154) (Bacteroides vulgatus), this protein is Adenine phosphoribosyltransferase.